The primary structure comprises 478 residues: NADH oxidase (478 aa).

FAD-binding positions include 8-12 (GINHA), D33, C43, V80, 111-114 (ASGA), K149, and Y177. H11 (proton acceptor) is an active-site residue. The Redox-active role is filled by C43. Position 43 is a cysteine sulfinic acid (-SO2H) (C43). Residues 170–185 (VAIV…LAEA), D197, and G264 contribute to the NAD(+) site. FAD-binding positions include 295–305 (LNHKDVYVIGG), L322, A323, and T324. Residue A353 participates in NAD(+) binding. F450 provides a ligand contact to FAD.

This sequence belongs to the class-III pyridine nucleotide-disulfide oxidoreductase family. FAD is required as a cofactor.

The enzyme catalyses 2 NADH + O2 + 2 H(+) = 2 NAD(+) + 2 H2O. Catalyzes the four-electron reduction of molecular oxygen to water. The protein is NADH oxidase (nox) of Mycoplasma genitalium (strain ATCC 33530 / DSM 19775 / NCTC 10195 / G37) (Mycoplasmoides genitalium).